The following is a 291-amino-acid chain: MSPATLLRSPREVRELSRRWRGEGAVVGLVPTMGALHEGHLSLVRRAWEECGRVIVSVFVNPTQFGEGEDFERYPRDLEGDRRLLAEAGCDAVFAPAVEDMYGGGTTDLASGERIFVEAGRLGELWEGEERPGHFRGVCTVVAMLFNAAEPHRAYFGEKDYQQLKVIQKMARDLLFGVEIVPCPTVREPDGLALSSRNAYLSPQERRAARALWRALEAAAGEARGGVRDARRLERAMEEVCRAEPLVRLQYAAVVDAETLQRLGELGDRPARALIAARVGETRLIDNAALP.

33–40 (MGALHEGH) provides a ligand contact to ATP. Catalysis depends on histidine 40, which acts as the Proton donor. Glutamine 64 is a binding site for (R)-pantoate. Position 64 (glutamine 64) interacts with beta-alanine. Residue 157–160 (GEKD) participates in ATP binding. Glutamine 163 contributes to the (R)-pantoate binding site. Residues valine 186 and 194–197 (LSSR) contribute to the ATP site.

It belongs to the pantothenate synthetase family. As to quaternary structure, homodimer.

It localises to the cytoplasm. The catalysed reaction is (R)-pantoate + beta-alanine + ATP = (R)-pantothenate + AMP + diphosphate + H(+). Its pathway is cofactor biosynthesis; (R)-pantothenate biosynthesis; (R)-pantothenate from (R)-pantoate and beta-alanine: step 1/1. In terms of biological role, catalyzes the condensation of pantoate with beta-alanine in an ATP-dependent reaction via a pantoyl-adenylate intermediate. The chain is Pantothenate synthetase from Rubrobacter xylanophilus (strain DSM 9941 / JCM 11954 / NBRC 16129 / PRD-1).